The following is a 573-amino-acid chain: SHC-transforming protein 2 (573 aa).

The PID domain maps to 125–309 (LGPGVSYIVR…LEELAWGDDD (185 aa)). The CH1 stretch occupies residues 310–477 (AAADHNYYNS…PTEEQLRQEP (168 aa)). Phosphotyrosine occurs at positions 316, 317, and 395. The 92-residue stretch at 478–569 (WYHGRMSRRA…ESELHLRGVV (92 aa)) folds into the SH2 domain.

Interacts with the Trk receptors in a phosphotyrosine-dependent manner and MEGF12. Once activated, binds to GRB2. In terms of processing, phosphorylated on tyrosine by the Trk receptors. As to expression, expressed in brain. Expressed at high level in the hypothalamus and at low level in the caudate nucleus.

Functionally, signaling adapter that couples activated growth factor receptors to signaling pathway in neurons. Involved in the signal transduction pathways of neurotrophin-activated Trk receptors in cortical neurons. In Mus musculus (Mouse), this protein is SHC-transforming protein 2 (Shc2).